A 702-amino-acid polypeptide reads, in one-letter code: Serotransferrin-A (702 aa).

Residues 1–19 form the signal peptide; it reads MDLSLRVALCLSMLALCLA. 2 consecutive Transferrin-like domains span residues 26–340 and 353–685; these read VRWC…ALKE and VRWC…SLNK. Cystine bridges form between C29–C64 and C39–C55. 2 residues coordinate Fe(3+): D79 and Y111. 3 disulfide bridges follow: C134–C217, C179–C192, and C245–C259. Positions 136, 140, 142, and 143 each coordinate hydrogencarbonate. Residue Y211 participates in Fe(3+) binding. Residue H267 coordinates Fe(3+). The tract at residues 340 to 349 is connecting region; the sequence is EGVKEDDSAA. Cystine bridges form between C356–C388 and C366–C379. The Fe(3+) site is built by D403 and Y442. 7 disulfides stabilise this stretch: C413–C697, C431–C658, C465–C544, C489–C686, C499–C513, C510–C527, and C584–C598. The hydrogencarbonate site is built by T467, R471, A473, and G474. Position 538 (Y538) interacts with Fe(3+). Residue H606 coordinates Fe(3+).

This sequence belongs to the transferrin family. Monomer. Plasma.

The protein localises to the secreted. Its function is as follows. Transferrins are iron binding transport proteins which can bind two Fe(3+) ions in association with the binding of an anion, usually bicarbonate. It is responsible for the transport of iron from sites of absorption and heme degradation to those of storage and utilization. Serum transferrin may also have a further role in stimulating cell proliferation. The chain is Serotransferrin-A (tf-a) from Xenopus laevis (African clawed frog).